The primary structure comprises 154 residues: Putative pre-16S rRNA nuclease (154 aa).

Belongs to the YqgF nuclease family.

It localises to the cytoplasm. Its function is as follows. Could be a nuclease involved in processing of the 5'-end of pre-16S rRNA. This Rickettsia akari (strain Hartford) protein is Putative pre-16S rRNA nuclease.